A 1201-amino-acid polypeptide reads, in one-letter code: Protein dduB (1201 aa).

Residues 1–22 (MKFIKYLLILFLILKINYFVES) form the signal peptide. Residues 23–1180 (GVDCQKNTEY…QDPSDELSTS (1158 aa)) lie on the Extracellular side of the membrane. 23 N-linked (GlcNAc...) asparagine glycosylation sites follow: Asn-68, Asn-122, Asn-150, Asn-185, Asn-283, Asn-348, Asn-360, Asn-437, Asn-448, Asn-518, Asn-535, Asn-554, Asn-585, Asn-631, Asn-759, Asn-815, Asn-830, Asn-844, Asn-946, Asn-1042, Asn-1058, Asn-1098, and Asn-1108. The chain crosses the membrane as a helical span at residues 1181–1201 (SFIQLNILSLLLISIFTIFIL).

It localises to the membrane. The chain is Protein dduB (dduB) from Dictyostelium discoideum (Social amoeba).